Consider the following 511-residue polypeptide: Cytochrome P450 4B1 (511 aa).

Glutamate 315 serves as a coordination point for heme. A Phosphoserine modification is found at serine 436. Residue cysteine 453 participates in heme binding.

The protein belongs to the cytochrome P450 family. The cofactor is heme. As to expression, detected in the liver and lung (at protein level).

The protein resides in the endoplasmic reticulum membrane. Its subcellular location is the microsome membrane. The enzyme catalyses an organic molecule + reduced [NADPH--hemoprotein reductase] + O2 = an alcohol + oxidized [NADPH--hemoprotein reductase] + H2O + H(+). Cytochromes P450 are a group of heme-thiolate monooxygenases. In liver microsomes, this enzyme is involved in an NADPH-dependent electron transport pathway. It oxidizes a variety of structurally unrelated compounds, including steroids, fatty acids, and xenobiotics. In Homo sapiens (Human), this protein is Cytochrome P450 4B1 (CYP4B1).